A 493-amino-acid polypeptide reads, in one-letter code: UDP-glucose 6-dehydrogenase (493 aa).

Residues 11 to 16, Asp-36, Arg-41, and 89 to 93 each bind NAD(+); these read GAGYVG and VNTPT. Positions 88–110 are disordered; that stretch reads SVNTPTKTYGMGKGRAADLKYIE. Lys-107 carries the post-translational modification N6-acetyllysine. The allosteric switch region stretch occupies residues 129-135; the sequence is KSTVPVR. 130–132 provides a ligand contact to NAD(+); sequence STV. Glu-161 functions as the Proton donor/acceptor in the catalytic mechanism. Substrate-binding positions include 161–165, 220–224, Arg-260, and 267–273; these read EFLAE, KLAAN, and KASVGFG. Glu-165 lines the NAD(+) pocket. The active-site Proton donor/acceptor is the Lys-220. Cys-276 acts as the Nucleophile in catalysis. 276–279 is an NAD(+) binding site; it reads CFQK. The tract at residues 321-325 is important for formation of active hexamer structure; the sequence is SLFNT. 338–339 serves as a coordination point for substrate; the sequence is FK. Residue Arg-346 participates in NAD(+) binding. Substrate is bound at residue Arg-442. Positions 466–493 are disordered; sequence VSSKRIPYTPGEIPKFSLQDPPNKKPKV. Residue Thr-474 is modified to Phosphothreonine.

The protein belongs to the UDP-glucose/GDP-mannose dehydrogenase family. As to quaternary structure, homohexamer.

The catalysed reaction is UDP-alpha-D-glucose + 2 NAD(+) + H2O = UDP-alpha-D-glucuronate + 2 NADH + 3 H(+). It participates in nucleotide-sugar biosynthesis; UDP-alpha-D-glucuronate biosynthesis; UDP-alpha-D-glucuronate from UDP-alpha-D-glucose: step 1/1. UDP-alpha-D-xylose (UDX) acts as a feedback inhibitor. It binds at the same site as the substrate, but functions as allosteric inhibitor by triggering a conformation change that disrupts the active hexameric ring structure and gives rise to an inactive, horseshoe-shaped hexamer. In terms of biological role, catalyzes the formation of UDP-alpha-D-glucuronate, a constituent of complex glycosaminoglycans. Required for the biosynthesis of chondroitin sulfate and heparan sulfate. Required for embryonic development via its role in the biosynthesis of glycosaminoglycans. Required for proper brain and neuronal development. The protein is UDP-glucose 6-dehydrogenase (Ugdh) of Rattus norvegicus (Rat).